A 269-amino-acid polypeptide reads, in one-letter code: Phosphate import ATP-binding protein PstB (269 aa).

Residues 14-253 (LTLEDVSISY…EFDSTKKIFS (240 aa)) enclose the ABC transporter domain. 46 to 53 (GPSGCGKS) provides a ligand contact to ATP.

Belongs to the ABC transporter superfamily. Phosphate importer (TC 3.A.1.7) family. As to quaternary structure, the complex is composed of two ATP-binding proteins (PstB), two transmembrane proteins (PstC and PstA) and a solute-binding protein (PstS).

It is found in the cell inner membrane. The catalysed reaction is phosphate(out) + ATP + H2O = ADP + 2 phosphate(in) + H(+). Its function is as follows. Part of the ABC transporter complex PstSACB involved in phosphate import. Responsible for energy coupling to the transport system. The polypeptide is Phosphate import ATP-binding protein PstB (Prochlorococcus marinus subsp. pastoris (strain CCMP1986 / NIES-2087 / MED4)).